The following is a 511-amino-acid chain: Maturase K (511 aa).

It belongs to the intron maturase 2 family. MatK subfamily.

The protein resides in the plastid. Its subcellular location is the chloroplast. In terms of biological role, usually encoded in the trnK tRNA gene intron. Probably assists in splicing its own and other chloroplast group II introns. The polypeptide is Maturase K (Bromelia plumieri (Karatas)).